Here is a 384-residue protein sequence, read N- to C-terminus: MTNAIDELQAIIAELKTEVEEQRAVIRQSRDRIEHMSAEVRMNIVKNYERIRDKTVAIVGVGGVGSVTADMLTRCGIGKLILFDYDKVELANMNRLFFTPDQAGLSKVEAAARTLTFINPDVRIETHNYNITTIDNFDNFLNTITGDGTVAGEPVDLVLSCVDNFEARMAINAACNEKCLNWFESGVSENAVSGHIQFLRPGDTACFACAPPLVVAENIDEKTLKREGVCAASLPTTMGITAGFLVQNALKYLLNFGEVSDYLGYNALNDFFPKMTLKPNPQCDDRNCLLRQKEFQARPKPVVVQEEAPTDEPLHASNDWGIELVAEDAPSNAPTDLSQSTDVGQGLRLAYEAPEKSSAEATQAATAPVDDTSLEDLMAQMKSM.

ATP is bound by residues G63, D84, K107, N130, and N164. Zn(2+) contacts are provided by C206 and C209. C230 (glycyl thioester intermediate) is an active-site residue. Zn(2+)-binding residues include C283 and C288. The tract at residues 352 to 375 is disordered; it reads EAPEKSSAEATQAATAPVDDTSLE.

The protein belongs to the ubiquitin-activating E1 family. UBA5 subfamily.

In terms of biological role, E1-like enzyme which activates UFM1. The protein is Ubiquitin-like modifier-activating enzyme 5 of Drosophila persimilis (Fruit fly).